A 351-amino-acid polypeptide reads, in one-letter code: Outer membrane porin PhoE (351 aa).

A signal peptide spans 1-21; it reads MKKSTLALMMMGFVASTATQA.

Belongs to the Gram-negative porin family. In terms of assembly, homotrimer.

The protein resides in the cell outer membrane. Functionally, uptake of inorganic phosphate, phosphorylated compounds, and some other negatively charged solutes. This is Outer membrane porin PhoE (phoE) from Klebsiella pneumoniae.